Consider the following 741-residue polypeptide: uncharacterized protein (741 aa).

An N-terminal signal peptide occupies residues 1–18; it reads MKTISILAFLVLARLIEA. Disordered regions lie at residues 142–300, 423–528, and 646–681; these read PKVE…GNVD, EEDE…SEQG, and ETVAPDTNSPDADQEQPDSVEPDNETTDAPINVEDD. A compositionally biased stretch (acidic residues) spans 147-165; it reads EEEEEEYDGEEDDDDESLT. 2 stretches are compositionally biased toward low complexity: residues 183-197 and 205-266; these read VEPSTTTESAISTTE and STTV…SSTT. N-linked (GlcNAc...) asparagine glycosylation is found at N232 and N241. Residues 423-432 show a composition bias toward acidic residues; sequence EEDEIDETET. Over residues 433–451 the composition is skewed to low complexity; that stretch reads TESTKTTETTKTTGPAETT. Residues N461 and N511 are each glycosylated (N-linked (GlcNAc...) asparagine). Residues 500–511 are compositionally biased toward acidic residues; sequence PIDESTESEEPN. Low complexity predominate over residues 512–528; sequence ESVTVTGDTTTDTSEQG. Positions 646–656 are enriched in polar residues; the sequence is ETVAPDTNSPD. Residues 657–671 show a composition bias toward acidic residues; that stretch reads ADQEQPDSVEPDNET. N-linked (GlcNAc...) asparagine glycosylation is present at N669. The GPI-anchor amidated asparagine moiety is linked to residue N719. Positions 720–741 are cleaved as a propeptide — removed in mature form; it reads AANLAGSISLSSGVLLLILMLI.

It is found in the cell membrane. This is an uncharacterized protein from Candida albicans (strain SC5314 / ATCC MYA-2876) (Yeast).